A 99-amino-acid chain; its full sequence is DNA-binding protein Fis (99 aa).

Positions 75 to 94 (QTRAANMLGINRGTLRKKLK) form a DNA-binding region, H-T-H motif.

It belongs to the transcriptional regulatory Fis family. As to quaternary structure, homodimer.

Functionally, activates ribosomal RNA transcription. Plays a direct role in upstream activation of rRNA promoters. This is DNA-binding protein Fis from Haemophilus influenzae (strain PittEE).